A 762-amino-acid chain; its full sequence is Centrosomal protein of 85 kDa (762 aa).

2 disordered regions span residues 1–26 (MAMQEKYPTEGISHVTSPSSDVIQKG) and 94–119 (VMPSTLGTSPAKPNSTPVGPSSSKLP). Composition is skewed to polar residues over residues 14-26 (HVTSPSSDVIQKG) and 98-111 (TLGTSPAKPNSTPV). Phosphoserine is present on serine 17. Phosphoserine is present on residues serine 126 and serine 141. A mediates interaction with NEK2 and is required for its function in the suppression of centrosome disjunction region spans residues 257 to 433 (GLSKPLPSQV…QLIRESLKVA (177 aa)). Coiled coils occupy residues 334–657 (EHLL…RQAQ) and 723–750 (PDVIKRKLEEVQQLRRDIEDLRTTMSDR). Positions 434–476 (LQKHSEEVKKQEERVKGRDKHINNLKKKCQKESEQNREKQQRI) are required for centrosome localization and for its function in the suppression of centrosome disjunction. Composition is skewed to basic and acidic residues over residues 443–455 (KQEERVKGRDKHI) and 463–474 (QKESEQNREKQQ). Disordered stretches follow at residues 443-474 (KQEERVKGRDKHINNLKKKCQKESEQNREKQQ) and 541-570 (EAEFSSAGHSLQDKQSVEETSGEGPEVEME). Serine 623 is subject to Phosphoserine.

The protein belongs to the CEP85 family. Homodimer. Interacts with STIL (via N-terminus); this interaction is essential for robust PLK4 activation and efficient centriole assembly and for PLK4-dependent cell migration. Interacts with PLK4; required for CEP85 to be able to drive centriole duplication and cell migration.

It localises to the cytoplasm. The protein resides in the cytoskeleton. The protein localises to the microtubule organizing center. Its subcellular location is the centrosome. It is found in the spindle pole. It localises to the nucleus. The protein resides in the nucleolus. The protein localises to the centriole. Its subcellular location is the cell cortex. Acts as a regulator of centriole duplication through a direct interaction with STIL, a key factor involved in the early steps of centriole formation. The CEP85-STIL protein complex acts as a modulator of PLK4-driven cytoskeletal rearrangements and directional cell motility. Acts as a negative regulator of NEK2 to maintain the centrosome integrity in interphase. Suppresses centrosome disjunction by inhibiting NEK2 kinase activity. This chain is Centrosomal protein of 85 kDa, found in Homo sapiens (Human).